The following is a 616-amino-acid chain: Probable methyltransferase PMT2 (616 aa).

Topologically, residues 1-13 are cytoplasmic; sequence MALKSSSADGKTR. The helical; Signal-anchor for type II membrane protein transmembrane segment at 14–34 threads the bilayer; that stretch reads SSVQIFIVFSLCCFFYILGAW. The Lumenal segment spans residues 35-616; that stretch reads QRSGFGKGDS…YWVTNSTSTH (582 aa). N-linked (GlcNAc...) asparagine glycans are attached at residues Asn-205 and Asn-611.

The protein belongs to the methyltransferase superfamily.

Its subcellular location is the golgi apparatus membrane. This chain is Probable methyltransferase PMT2, found in Arabidopsis thaliana (Mouse-ear cress).